Here is a 382-residue protein sequence, read N- to C-terminus: UDP-N-acetylglucosamine--N-acetylmuramyl-(pentapeptide) pyrophosphoryl-undecaprenol N-acetylglucosamine transferase (382 aa).

Residues 17 to 19, Asn137, Arg179, Ser213, and Gln308 contribute to the UDP-N-acetyl-alpha-D-glucosamine site; that span reads TAG.

The protein belongs to the glycosyltransferase 28 family. MurG subfamily.

Its subcellular location is the cell membrane. The enzyme catalyses di-trans,octa-cis-undecaprenyl diphospho-N-acetyl-alpha-D-muramoyl-L-alanyl-D-glutamyl-meso-2,6-diaminopimeloyl-D-alanyl-D-alanine + UDP-N-acetyl-alpha-D-glucosamine = di-trans,octa-cis-undecaprenyl diphospho-[N-acetyl-alpha-D-glucosaminyl-(1-&gt;4)]-N-acetyl-alpha-D-muramoyl-L-alanyl-D-glutamyl-meso-2,6-diaminopimeloyl-D-alanyl-D-alanine + UDP + H(+). It functions in the pathway cell wall biogenesis; peptidoglycan biosynthesis. Functionally, cell wall formation. Catalyzes the transfer of a GlcNAc subunit on undecaprenyl-pyrophosphoryl-MurNAc-pentapeptide (lipid intermediate I) to form undecaprenyl-pyrophosphoryl-MurNAc-(pentapeptide)GlcNAc (lipid intermediate II). The chain is UDP-N-acetylglucosamine--N-acetylmuramyl-(pentapeptide) pyrophosphoryl-undecaprenol N-acetylglucosamine transferase from Rhodococcus jostii (strain RHA1).